The following is an 803-amino-acid chain: Phenylalanine--tRNA ligase beta subunit (803 aa).

Positions 39–152 constitute a tRNA-binding domain; that stretch reads TPGFQKVVAG…PDASPGADAA (114 aa). In terms of domain architecture, B5 spans 406–480; that stretch reads RQPVTIELRP…RLYGYNRIPV (75 aa). Mg(2+) contacts are provided by aspartate 458, aspartate 464, glutamate 467, and glutamate 468. The 94-residue stretch at 709–802 folds into the FDX-ACB domain; that stretch reads PRFPAVERDL…LEERLGASLR (94 aa).

The protein belongs to the phenylalanyl-tRNA synthetase beta subunit family. Type 1 subfamily. As to quaternary structure, tetramer of two alpha and two beta subunits. It depends on Mg(2+) as a cofactor.

It localises to the cytoplasm. The catalysed reaction is tRNA(Phe) + L-phenylalanine + ATP = L-phenylalanyl-tRNA(Phe) + AMP + diphosphate + H(+). The polypeptide is Phenylalanine--tRNA ligase beta subunit (Moorella thermoacetica (strain ATCC 39073 / JCM 9320)).